A 69-amino-acid chain; its full sequence is Beta-defensin 122 (69 aa).

The first 19 residues, 1–19, serve as a signal peptide directing secretion; that stretch reads MKPFLVTLAVLLLFFQVTA. 3 disulfide bridges follow: Cys-26–Cys-53, Cys-33–Cys-47, and Cys-37–Cys-54.

The protein belongs to the beta-defensin family.

It localises to the secreted. Has antibacterial activity. This chain is Beta-defensin 122 (DEFB122), found in Macaca mulatta (Rhesus macaque).